We begin with the raw amino-acid sequence, 202 residues long: Small ribosomal subunit protein uS4 (202 aa).

Residues 22–43 (TRKSARRAYPPGQHGQNRKKRS) are disordered. An S4 RNA-binding domain is found at 90–152 (MRLDNTVFRL…AQSRKLVEAN (63 aa)).

It belongs to the universal ribosomal protein uS4 family. In terms of assembly, part of the 30S ribosomal subunit. Contacts protein S5. The interaction surface between S4 and S5 is involved in control of translational fidelity.

Functionally, one of the primary rRNA binding proteins, it binds directly to 16S rRNA where it nucleates assembly of the body of the 30S subunit. In terms of biological role, with S5 and S12 plays an important role in translational accuracy. The polypeptide is Small ribosomal subunit protein uS4 (Nostoc punctiforme (strain ATCC 29133 / PCC 73102)).